Consider the following 485-residue polypeptide: Catalase isozyme 1 (485 aa).

Residues His58 and Asn131 contribute to the active site. Tyr341 lines the heme pocket.

The protein belongs to the catalase family. As to quaternary structure, homotetramer. It depends on heme as a cofactor.

The protein localises to the peroxisome. It carries out the reaction 2 H2O2 = O2 + 2 H2O. Occurs in almost all aerobically respiring organisms and serves to protect cells from the toxic effects of hydrogen peroxide. This Nicotiana plumbaginifolia (Leadwort-leaved tobacco) protein is Catalase isozyme 1 (CAT1).